Here is a 174-residue protein sequence, read N- to C-terminus: Shikimate kinase 2 (174 aa).

12 to 17 is a binding site for ATP; it reads GAGKTT. Thr-16 and Asp-32 together coordinate Mg(2+). Residues Asp-34, Arg-58, and Gly-79 each coordinate substrate. The interval 112–126 is LID domain; that stretch reads EEYPQDTQRPTLTGR. Position 120 (Arg-120) interacts with ATP. Arg-139 serves as a coordination point for substrate.

This sequence belongs to the shikimate kinase family. AroL subfamily. As to quaternary structure, monomer. Requires Mg(2+) as cofactor.

Its subcellular location is the cytoplasm. It carries out the reaction shikimate + ATP = 3-phosphoshikimate + ADP + H(+). The protein operates within metabolic intermediate biosynthesis; chorismate biosynthesis; chorismate from D-erythrose 4-phosphate and phosphoenolpyruvate: step 5/7. Its function is as follows. Catalyzes the specific phosphorylation of the 3-hydroxyl group of shikimic acid using ATP as a cosubstrate. The protein is Shikimate kinase 2 of Serratia proteamaculans (strain 568).